Consider the following 408-residue polypeptide: UDP-N-acetylglucosamine--dolichyl-phosphate N-acetylglucosaminephosphotransferase (408 aa).

Residues methionine 1–proline 10 are Lumenal-facing. The chain crosses the membrane as a helical span at residues leucine 11–alanine 38. The Cytoplasmic segment spans residues alanine 39 to glutamine 58. UDP-N-acetyl-alpha-D-glucosamine contacts are provided by residues glutamine 44–leucine 46 and glutamate 56. The helical transmembrane segment at glycine 59–phenylalanine 78 threads the bilayer. Over leucine 79 to proline 91 the chain is Lumenal. Residues histidine 92–leucine 118 form a helical membrane-spanning segment. Topologically, residues asparagine 119–proline 121 are cytoplasmic. The helical transmembrane segment at tryptophan 122 to asparagine 143 threads the bilayer. Lysine 125 contacts dolichyl phosphate. The Lumenal portion of the chain corresponds to phenylalanine 144–glycine 166. Residue asparagine 146 is glycosylated (N-linked (GlcNAc...) asparagine). Residues isoleucine 167–isoleucine 186 form a helical membrane-spanning segment. Position 178-186 (valine 178–isoleucine 186) interacts with dolichyl phosphate. Asparagine 185 provides a ligand contact to Mg(2+). The Cytoplasmic portion of the chain corresponds to leucine 187–glycine 192. Asparagine 191 provides a ligand contact to UDP-N-acetyl-alpha-D-glucosamine. The helical transmembrane segment at leucine 193–leucine 213 threads the bilayer. Residues glutamate 214 to arginine 218 lie on the Lumenal side of the membrane. The helical transmembrane segment at aspartate 219–asparagine 242 threads the bilayer. Residues tryptophan 243–valine 250 lie on the Cytoplasmic side of the membrane. A helical transmembrane segment spans residues glycine 251 to glycine 269. Mg(2+) is bound at residue aspartate 252. The Lumenal segment spans residues histidine 270–phenylalanine 271. Residues serine 272–leucine 293 form a helical membrane-spanning segment. The Cytoplasmic portion of the chain corresponds to leucine 294–histidine 375. Residue arginine 301–arginine 303 coordinates UDP-N-acetyl-alpha-D-glucosamine. A helical membrane pass occupies residues glutamate 376–glutamine 400. Residues leucine 401–valine 408 are Lumenal-facing.

Belongs to the glycosyltransferase 4 family. Homodimer. Mg(2+) serves as cofactor.

It localises to the endoplasmic reticulum membrane. The catalysed reaction is a di-trans,poly-cis-dolichyl phosphate + UDP-N-acetyl-alpha-D-glucosamine = an N-acetyl-alpha-D-glucosaminyl-diphospho-di-trans,poly-cis-dolichol + UMP. It functions in the pathway protein modification; protein glycosylation. Inhibited by natural nucleoside antibiotic tunicamycin, which acts as a structural analog and competitor of UDP-GlcNAc. Its function is as follows. UDP-N-acetylglucosamine--dolichyl-phosphate N-acetylglucosaminephosphotransferase that operates in the biosynthetic pathway of dolichol-linked oligosaccharides, the glycan precursors employed in protein asparagine (N)-glycosylation. The assembly of dolichol-linked oligosaccharides begins on the cytosolic side of the endoplasmic reticulum membrane and finishes in its lumen. The sequential addition of sugars to dolichol pyrophosphate produces dolichol-linked oligosaccharides containing fourteen sugars, including two GlcNAcs, nine mannoses and three glucoses. Once assembled, the oligosaccharide is transferred from the lipid to nascent proteins by oligosaccharyltransferases. Catalyzes the initial step of dolichol-linked oligosaccharide biosynthesis, transfering GlcNAc-1-P from cytosolic UDP-GlcNAc onto the carrier lipid dolichyl phosphate (P-dolichol), yielding GlcNAc-P-P-dolichol embedded in the cytoplasmic leaflet of the endoplasmic reticulum membrane. The protein is UDP-N-acetylglucosamine--dolichyl-phosphate N-acetylglucosaminephosphotransferase (DPAGT1) of Cricetulus longicaudatus (Long-tailed dwarf hamster).